A 395-amino-acid chain; its full sequence is Imidazolonepropionase (395 aa).

Residues histidine 63 and histidine 65 each contribute to the Fe(3+) site. Positions 63 and 65 each coordinate Zn(2+). Residues arginine 72, tyrosine 135, and histidine 168 each coordinate 4-imidazolone-5-propanoate. Tyrosine 135 lines the N-formimidoyl-L-glutamate pocket. Histidine 233 contacts Fe(3+). Histidine 233 contributes to the Zn(2+) binding site. Glutamine 236 serves as a coordination point for 4-imidazolone-5-propanoate. Aspartate 308 lines the Fe(3+) pocket. Aspartate 308 provides a ligand contact to Zn(2+). The N-formimidoyl-L-glutamate site is built by asparagine 310 and glycine 312. A 4-imidazolone-5-propanoate-binding site is contributed by threonine 313.

Belongs to the metallo-dependent hydrolases superfamily. HutI family. It depends on Zn(2+) as a cofactor. The cofactor is Fe(3+).

It localises to the cytoplasm. The enzyme catalyses 4-imidazolone-5-propanoate + H2O = N-formimidoyl-L-glutamate. The protein operates within amino-acid degradation; L-histidine degradation into L-glutamate; N-formimidoyl-L-glutamate from L-histidine: step 3/3. In terms of biological role, catalyzes the hydrolytic cleavage of the carbon-nitrogen bond in imidazolone-5-propanoate to yield N-formimidoyl-L-glutamate. It is the third step in the universal histidine degradation pathway. This chain is Imidazolonepropionase, found in Cereibacter sphaeroides (strain KD131 / KCTC 12085) (Rhodobacter sphaeroides).